A 144-amino-acid chain; its full sequence is Large ribosomal subunit protein uL15 (144 aa).

The segment at 1 to 62 is disordered; that stretch reads MELNNLKPAE…GQMPLQRRLP (62 aa). The span at 21–31 shows a compositional bias: gly residues; that stretch reads RGIGSGLGKTA.

This sequence belongs to the universal ribosomal protein uL15 family. Part of the 50S ribosomal subunit.

Its function is as follows. Binds to the 23S rRNA. The chain is Large ribosomal subunit protein uL15 from Paraburkholderia phymatum (strain DSM 17167 / CIP 108236 / LMG 21445 / STM815) (Burkholderia phymatum).